The following is a 1535-amino-acid chain: Protein artichoke (1535 aa).

Positions Met1–Ala19 are cleaved as a signal peptide. LRR repeat units lie at residues Lys64–Ser87, Gln89–Glu110, Glu112–Gly135, Met136–Gly157, Leu158–His181, Pro183–Gly206, Leu207–Arg230, Leu231–Asp256, Leu257–Asp280, Leu281–Arg304, Pro306–Gln328, Gly331–Ala356, Leu357–Gly380, Gly382–Ala404, Pro406–Leu429, Pro430–Gly452, Leu453–His476, Pro478–His500, Leu521–Asp545, Leu548–Gly571, Met573–Gly595, Gln597–Pro619, Leu620–Asn643, Ser645–Thr667, Arg669–Leu691, Asn692–Gly714, Arg716–Asn738, Leu739–Gly762, Asp764–Glu786, Pro788–Asn810, Ala811–Ser834, Met835–Ala858, Asn860–Thr882, and Met883–Asn906. Residues Asn919–Val963 form the LRRCT domain. Disordered regions lie at residues His1036 to Ile1055, Thr1253 to Tyr1331, Val1377 to Thr1416, and Ala1429 to Ala1449. Residues Thr1253 to Ala1270 are compositionally biased toward polar residues. Composition is skewed to low complexity over residues Thr1271–Thr1285 and Thr1293–Thr1315. Polar residues-rich tracts occupy residues Pro1316–Asp1328 and Val1377–Thr1391. Over residues Thr1398–Pro1407 the composition is skewed to pro residues.

It is found in the secreted. The protein resides in the extracellular space. It localises to the extracellular matrix. The protein localises to the cytoplasm. In terms of biological role, required for normal morphology and function of ciliated sensory organs. The polypeptide is Protein artichoke (Drosophila melanogaster (Fruit fly)).